We begin with the raw amino-acid sequence, 242 residues long: Uridylate kinase (242 aa).

Lys11–Gly14 contacts ATP. Residues Gly19–Gly24 are involved in allosteric activation by GTP. Gly53 lines the UMP pocket. 2 residues coordinate ATP: Gly54 and Arg58. Residues Asp73 and Ser134–Thr141 contribute to the UMP site. The ATP site is built by Thr161, Tyr167, and Asp170.

This sequence belongs to the UMP kinase family. As to quaternary structure, homohexamer.

Its subcellular location is the cytoplasm. It carries out the reaction UMP + ATP = UDP + ADP. Its pathway is pyrimidine metabolism; CTP biosynthesis via de novo pathway; UDP from UMP (UMPK route): step 1/1. Allosterically activated by GTP. Inhibited by UTP. Functionally, catalyzes the reversible phosphorylation of UMP to UDP. The chain is Uridylate kinase from Nostoc sp. (strain PCC 7120 / SAG 25.82 / UTEX 2576).